The following is a 432-amino-acid chain: Muscle cell intermediate filament protein OV71 (432 aa).

The interval 1-111 (KLIDELEEYK…RVHDQEISEL (111 aa)) is coil 1B. One can recognise an IF rod domain in the interval 1–277 (KLIDELEEYK…KMLEGEENRA (277 aa)). The interval 112–128 (QAMAARDTTSENREYFK) is linker 12. Residues 129–277 (NELSSAIRDI…KMLEGEENRA (149 aa)) form a coil 2 region. Residues 278-432 (GLRQLVEQVV…HIQRSSHTIS (155 aa)) form a tail region. Residues 310–427 (SRTSFQRSAK…EERASHIQRS (118 aa)) enclose the LTD domain.

It belongs to the intermediate filament family.

This is Muscle cell intermediate filament protein OV71 (OV71) from Onchocerca volvulus.